Consider the following 179-residue polypeptide: NAD(P)H-quinone oxidoreductase subunit I, chloroplastic (179 aa).

4Fe-4S ferredoxin-type domains follow at residues 55–84 (GRIHFEFDKCIACEVCVRVCPIDLPVVDWR) and 95–124 (LNYSIDFGVCIFCGNCVEYCPTNCLSMTEE). The [4Fe-4S] cluster site is built by Cys64, Cys67, Cys70, Cys74, Cys104, Cys107, Cys110, and Cys114.

Belongs to the complex I 23 kDa subunit family. As to quaternary structure, NDH is composed of at least 16 different subunits, 5 of which are encoded in the nucleus. Requires [4Fe-4S] cluster as cofactor.

It localises to the plastid. The protein resides in the chloroplast thylakoid membrane. It carries out the reaction a plastoquinone + NADH + (n+1) H(+)(in) = a plastoquinol + NAD(+) + n H(+)(out). The enzyme catalyses a plastoquinone + NADPH + (n+1) H(+)(in) = a plastoquinol + NADP(+) + n H(+)(out). Functionally, NDH shuttles electrons from NAD(P)H:plastoquinone, via FMN and iron-sulfur (Fe-S) centers, to quinones in the photosynthetic chain and possibly in a chloroplast respiratory chain. The immediate electron acceptor for the enzyme in this species is believed to be plastoquinone. Couples the redox reaction to proton translocation, and thus conserves the redox energy in a proton gradient. This Acorus calamus (Sweet flag) protein is NAD(P)H-quinone oxidoreductase subunit I, chloroplastic.